Consider the following 604-residue polypeptide: Sulfite reductase [NADPH] flavoprotein alpha-component (604 aa).

Positions 65 to 203 (VTILYGSQTG…AAGQWHADVL (139 aa)) constitute a Flavodoxin-like domain. Residues 71 to 76 (SQTGNG), 118 to 121 (STHG), and 154 to 163 (LGDSSYEFFC) contribute to the FMN site. The FAD-binding FR-type domain maps to 236 to 453 (QNPYSAEVLV…VEPNKHFRLP (218 aa)). Residues T324, L358, 392 to 395 (RLYS), 410 to 412 (TVA), and 425 to 428 (GGAS) each bind FAD. Residues 524-525 (SR), 530-534 (KIYVQ), and D566 contribute to the NADP(+) site. FAD is bound at residue Y604.

Belongs to the NADPH-dependent sulphite reductase flavoprotein subunit CysJ family. This sequence in the N-terminal section; belongs to the flavodoxin family. The protein in the C-terminal section; belongs to the flavoprotein pyridine nucleotide cytochrome reductase family. In terms of assembly, alpha(8)-beta(8). The alpha component is a flavoprotein, the beta component is a hemoprotein. The cofactor is FAD. FMN serves as cofactor.

It catalyses the reaction hydrogen sulfide + 3 NADP(+) + 3 H2O = sulfite + 3 NADPH + 4 H(+). It participates in sulfur metabolism; hydrogen sulfide biosynthesis; hydrogen sulfide from sulfite (NADPH route): step 1/1. Component of the sulfite reductase complex that catalyzes the 6-electron reduction of sulfite to sulfide. This is one of several activities required for the biosynthesis of L-cysteine from sulfate. The flavoprotein component catalyzes the electron flow from NADPH -&gt; FAD -&gt; FMN to the hemoprotein component. The protein is Sulfite reductase [NADPH] flavoprotein alpha-component of Shewanella sp. (strain MR-7).